Reading from the N-terminus, the 159-residue chain is V-type proton ATPase 16 kDa proteolipid subunit c (159 aa).

Topologically, residues 1–12 are lumenal; sequence MSSEVSSDNPIY. Residues 13–35 form a helical membrane-spanning segment; the sequence is GPFFGVMGAASAIIFSALGAAYG. The Cytoplasmic portion of the chain corresponds to 36-57; the sequence is TAKSGTGIAAMSVMRPELIMKS. The helical transmembrane segment at 58-78 threads the bilayer; sequence IIPVVMAGIIAIYGLVVAVLI. At 79–96 the chain is on the lumenal side; sequence AGALEEPSKYSLYRGFIH. The chain crosses the membrane as a helical span at residues 97–118; sequence LGAGLAVGFSGLAAGFAIGIVG. Residues 119–130 are Cytoplasmic-facing; sequence DAGVRGTAQQPR. The chain crosses the membrane as a helical span at residues 131-156; it reads LFVGMILILIFAEVLGLYGLIVAIYL. The Lumenal segment spans residues 157–159; it reads YTK.

It belongs to the V-ATPase proteolipid subunit family. In terms of assembly, V-ATPase is a heteromultimeric enzyme made up of two complexes: the ATP-hydrolytic V1 complex and the proton translocation V0 complex. The V1 complex consists of three catalytic AB heterodimers that form a heterohexamer, three peripheral stalks each consisting of EG heterodimers, one central rotor including subunits D and F, and the regulatory subunits C and H. The proton translocation complex V0 consists of the proton transport subunit a, a ring of proteolipid subunits c9c'', rotary subunit d, subunits e and f, and the accessory subunits VhaAC45 and ATP6AP2. As to expression, expressed in the larval middle mid-gut; predominantly in the copper cell region with lower levels of expression in the interstitial cells.

Its subcellular location is the membrane. Its function is as follows. Proton-conducting pore forming subunit of the V0 complex of vacuolar(H+)-ATPase (V-ATPase), a multisubunit enzyme composed of a peripheral complex (V1) that hydrolyzes ATP and a membrane integral complex (V0) that translocates protons. V-ATPase is responsible for acidifying and maintaining the pH of intracellular compartments and in some cell types, is targeted to the plasma membrane, where it is responsible for acidifying the extracellular environment. In enterocytes, acts as part of a pHCl-2 sensory pathway which mediates Tor-dependent larval growth and metabolism in response to zinc availability. Likely acts in maintaining enterocyte lysosomal acidification which consequently promotes Tor activation at the lysosome membrane. This Drosophila melanogaster (Fruit fly) protein is V-type proton ATPase 16 kDa proteolipid subunit c (Vha16-1).